The sequence spans 185 residues: N-alpha-acetyltransferase 30 (185 aa).

Positions 31-179 (IEYIPYQGES…DAVRLLLPLN (149 aa)) constitute an N-acetyltransferase domain.

Belongs to the acetyltransferase family. MAK3 subfamily.

Its function is as follows. Probable catalytic component of a complex displaying alpha (N-terminal) acetyltransferase activity. The protein is N-alpha-acetyltransferase 30 of Dictyostelium discoideum (Social amoeba).